The following is a 355-amino-acid chain: UDP-3-O-acylglucosamine N-acyltransferase (355 aa).

H252 functions as the Proton acceptor in the catalytic mechanism.

The protein belongs to the transferase hexapeptide repeat family. LpxD subfamily. In terms of assembly, homotrimer.

It catalyses the reaction a UDP-3-O-[(3R)-3-hydroxyacyl]-alpha-D-glucosamine + a (3R)-hydroxyacyl-[ACP] = a UDP-2-N,3-O-bis[(3R)-3-hydroxyacyl]-alpha-D-glucosamine + holo-[ACP] + H(+). The protein operates within bacterial outer membrane biogenesis; LPS lipid A biosynthesis. Its function is as follows. Catalyzes the N-acylation of UDP-3-O-acylglucosamine using 3-hydroxyacyl-ACP as the acyl donor. Is involved in the biosynthesis of lipid A, a phosphorylated glycolipid that anchors the lipopolysaccharide to the outer membrane of the cell. The sequence is that of UDP-3-O-acylglucosamine N-acyltransferase from Polynucleobacter asymbioticus (strain DSM 18221 / CIP 109841 / QLW-P1DMWA-1) (Polynucleobacter necessarius subsp. asymbioticus).